Reading from the N-terminus, the 368-residue chain is Isopentenyl-diphosphate delta-isomerase (368 aa).

7–8 (RK) is a substrate binding site. FMN-binding positions include Thr-65, 66-68 (GMT), Ser-96, and Asn-125. 96-98 (SQR) lines the substrate pocket. Gln-160 is a binding site for substrate. Residue Glu-161 participates in Mg(2+) binding. FMN is bound by residues Lys-193, Ser-218, Thr-223, 275–277 (GIR), and 296–297 (AL).

The protein belongs to the IPP isomerase type 2 family. As to quaternary structure, homooctamer. Dimer of tetramers. The cofactor is FMN. Requires NADPH as cofactor. Mg(2+) serves as cofactor.

It is found in the cytoplasm. The catalysed reaction is isopentenyl diphosphate = dimethylallyl diphosphate. Involved in the biosynthesis of isoprenoids. Catalyzes the 1,3-allylic rearrangement of the homoallylic substrate isopentenyl (IPP) to its allylic isomer, dimethylallyl diphosphate (DMAPP). The polypeptide is Isopentenyl-diphosphate delta-isomerase (Saccharolobus shibatae (strain ATCC 51178 / DSM 5389 / JCM 8931 / NBRC 15437 / B12) (Sulfolobus shibatae)).